The chain runs to 371 residues: MSQVKRTPLYETHRALGAKMIPFGGWDMPVQYSGIIAEHNATREAAGLFDVSHMGEIFITGEPKIVLDFLELVTCNSVASLSDFQVQYNAILNENGGLVDDVTIYKFSVEKYMICSNASNYETVTAHLLKYLPASGVKVSDQSPNWHQIALQGPKANEIFSKFLGRELDSIKYYHFALLDYQGEEIIVSRTGYTGEDGFEIYSSIPFGLKLWSGLSELGKPQGLLPCGLGARDTLRIEAKYPLYGHELNNQWTPIESGIGWIVKEKKNPYFSSGKILSQKKNGTEFKIVAFALTEAGVPRENFRVLDFQGNEIGKTTSGTFSPSLKKGIGLASIRTEKIKDGEPIQIEIREQPKQAIITTKPFIPGSIRKN.

It belongs to the GcvT family. In terms of assembly, the glycine cleavage system is composed of four proteins: P, T, L and H.

It carries out the reaction N(6)-[(R)-S(8)-aminomethyldihydrolipoyl]-L-lysyl-[protein] + (6S)-5,6,7,8-tetrahydrofolate = N(6)-[(R)-dihydrolipoyl]-L-lysyl-[protein] + (6R)-5,10-methylene-5,6,7,8-tetrahydrofolate + NH4(+). The glycine cleavage system catalyzes the degradation of glycine. The sequence is that of Aminomethyltransferase from Leptospira borgpetersenii serovar Hardjo-bovis (strain JB197).